The following is a 241-amino-acid chain: Pyridoxine 5'-phosphate synthase (241 aa).

Asparagine 7 is a binding site for 3-amino-2-oxopropyl phosphate. 9–10 serves as a coordination point for 1-deoxy-D-xylulose 5-phosphate; the sequence is DH. A 3-amino-2-oxopropyl phosphate-binding site is contributed by arginine 18. Histidine 43 (proton acceptor) is an active-site residue. 1-deoxy-D-xylulose 5-phosphate is bound by residues arginine 45 and histidine 50. Glutamate 70 serves as the catalytic Proton acceptor. Threonine 100 contacts 1-deoxy-D-xylulose 5-phosphate. The active-site Proton donor is the histidine 190. Residues glycine 191 and 212–213 each bind 3-amino-2-oxopropyl phosphate; that span reads GH.

This sequence belongs to the PNP synthase family. Homooctamer; tetramer of dimers.

Its subcellular location is the cytoplasm. It catalyses the reaction 3-amino-2-oxopropyl phosphate + 1-deoxy-D-xylulose 5-phosphate = pyridoxine 5'-phosphate + phosphate + 2 H2O + H(+). Its pathway is cofactor biosynthesis; pyridoxine 5'-phosphate biosynthesis; pyridoxine 5'-phosphate from D-erythrose 4-phosphate: step 5/5. Functionally, catalyzes the complicated ring closure reaction between the two acyclic compounds 1-deoxy-D-xylulose-5-phosphate (DXP) and 3-amino-2-oxopropyl phosphate (1-amino-acetone-3-phosphate or AAP) to form pyridoxine 5'-phosphate (PNP) and inorganic phosphate. The chain is Pyridoxine 5'-phosphate synthase from Bordetella avium (strain 197N).